Here is a 279-residue protein sequence, read N- to C-terminus: Putative pyruvate, phosphate dikinase regulatory protein (279 aa).

153–160 (GVSRTSKT) is a binding site for ADP.

Belongs to the pyruvate, phosphate/water dikinase regulatory protein family. PDRP subfamily.

It carries out the reaction N(tele)-phospho-L-histidyl/L-threonyl-[pyruvate, phosphate dikinase] + ADP = N(tele)-phospho-L-histidyl/O-phospho-L-threonyl-[pyruvate, phosphate dikinase] + AMP + H(+). It catalyses the reaction N(tele)-phospho-L-histidyl/O-phospho-L-threonyl-[pyruvate, phosphate dikinase] + phosphate + H(+) = N(tele)-phospho-L-histidyl/L-threonyl-[pyruvate, phosphate dikinase] + diphosphate. In terms of biological role, bifunctional serine/threonine kinase and phosphorylase involved in the regulation of the pyruvate, phosphate dikinase (PPDK) by catalyzing its phosphorylation/dephosphorylation. This is Putative pyruvate, phosphate dikinase regulatory protein from Rhodopseudomonas palustris (strain BisA53).